The sequence spans 462 residues: ATP-dependent protease ATPase subunit HslU (462 aa).

Residues Ile21, 63-68, Asp275, Glu340, and Arg412 each bind ATP; that span reads GVGKTE.

This sequence belongs to the ClpX chaperone family. HslU subfamily. In terms of assembly, a double ring-shaped homohexamer of HslV is capped on each side by a ring-shaped HslU homohexamer. The assembly of the HslU/HslV complex is dependent on binding of ATP.

Its subcellular location is the cytoplasm. Functionally, ATPase subunit of a proteasome-like degradation complex; this subunit has chaperone activity. The binding of ATP and its subsequent hydrolysis by HslU are essential for unfolding of protein substrates subsequently hydrolyzed by HslV. HslU recognizes the N-terminal part of its protein substrates and unfolds these before they are guided to HslV for hydrolysis. The protein is ATP-dependent protease ATPase subunit HslU of Pseudothermotoga lettingae (strain ATCC BAA-301 / DSM 14385 / NBRC 107922 / TMO) (Thermotoga lettingae).